We begin with the raw amino-acid sequence, 266 residues long: 3-methyl-2-oxobutanoate hydroxymethyltransferase (266 aa).

Mg(2+) contacts are provided by aspartate 45 and aspartate 84. 3-methyl-2-oxobutanoate-binding positions include 45–46 (DS), aspartate 84, and lysine 112. Glutamate 114 contributes to the Mg(2+) binding site. Glutamate 181 (proton acceptor) is an active-site residue.

This sequence belongs to the PanB family. In terms of assembly, homodecamer; pentamer of dimers. The cofactor is Mg(2+).

It localises to the cytoplasm. It catalyses the reaction 3-methyl-2-oxobutanoate + (6R)-5,10-methylene-5,6,7,8-tetrahydrofolate + H2O = 2-dehydropantoate + (6S)-5,6,7,8-tetrahydrofolate. It functions in the pathway cofactor biosynthesis; (R)-pantothenate biosynthesis; (R)-pantoate from 3-methyl-2-oxobutanoate: step 1/2. Its function is as follows. Catalyzes the reversible reaction in which hydroxymethyl group from 5,10-methylenetetrahydrofolate is transferred onto alpha-ketoisovalerate to form ketopantoate. The chain is 3-methyl-2-oxobutanoate hydroxymethyltransferase from Pseudomonas putida (strain ATCC 700007 / DSM 6899 / JCM 31910 / BCRC 17059 / LMG 24140 / F1).